A 546-amino-acid chain; its full sequence is Phosphatidylinositol 4-phosphate 5-kinase type-1 alpha (546 aa).

The 369-residue stretch at 65-433 folds into the PIPK domain; sequence TSSALKGAIQ…RFQRFMCNTV (369 aa). A Glycyl lysine isopeptide (Lys-Gly) (interchain with G-Cter in ubiquitin) cross-link involves residue lysine 87. A disordered region spans residues 441–522; that stretch reads PSPTKKFRSG…PGPSFSPAVG (82 aa). A compositionally biased stretch (low complexity) spans 449–461; sequence SGPSFSRRSGPSG. Residues 462–471 show a composition bias toward polar residues; that stretch reads NSCTPSQPTA. A compositionally biased stretch (basic and acidic residues) spans 473–493; the sequence is GEHKAQVTTKAEVEPDIHLGR.

As to quaternary structure, interacts with RAC1. Interacts with TUT1. Forms a complex with CDH1/E-cadherin, CTNNB1/beta-catenin and CTNND1 at the plasma membrane upon calcium stimulation. Found in a ternary complex with IRS1 and DGKZ in the absence of insulin stimulation. Interacts with DGKZ. Interacts with PIP4K2C; the interaction inhibits PIP5K1A kinase activity.

Its subcellular location is the cell membrane. It localises to the cytoplasm. The protein localises to the nucleus. The protein resides in the nucleus speckle. It is found in the cell projection. Its subcellular location is the ruffle. It localises to the lamellipodium. The enzyme catalyses a 1,2-diacyl-sn-glycero-3-phospho-(1D-myo-inositol 4-phosphate) + ATP = a 1,2-diacyl-sn-glycero-3-phospho-(1D-myo-inositol-4,5-bisphosphate) + ADP + H(+). The catalysed reaction is 1-octadecanoyl-2-(5Z,8Z,11Z,14Z)-eicosatetraenoyl-sn-glycero-3-phospho-1D-myo-inositol 4-phosphate + ATP = 1-octadecanoyl-2-(5Z,8Z,11Z,14Z)-eicosatetraenoyl-sn-glycero-3-phospho-1D-myo-inositol 4,5-bisphosphate + ADP + H(+). It carries out the reaction 1,2-dihexadecanoyl-sn-glycero-3-phospho-(1D-myo-inositol-4-phosphate) + ATP = 1,2-dihexadecanoyl-sn-glycero-3-phospho-(1D-myo-inositol-4,5-bisphosphate) + ADP + H(+). It catalyses the reaction 1-octadecanoyl-2-(9Z)-octadecenoyl-sn-glycero-3-phospho-1D-myo-inositol 4-phosphate + ATP = 1-octadecanoyl-2-(9Z)-octadecenoyl-sn-glycero-3-phospho-1D-myo-inositol 4,5-bisphosphate + ADP + H(+). The enzyme catalyses 1-octadecanoyl-2-(9Z)-octadecenoyl-sn-glycero-3-phospho-1D-myo-inositol + ATP = 1-octadecanoyl-2-(9Z)-octadecenoyl-sn-glycero-3-phospho-1D-myo-inositol 5-phosphate + ADP + H(+). The catalysed reaction is 1-octadecanoyl-2-(9Z,12Z)-octadecadienoyl-sn-glycero-3-phospho-1D-myo-inositol + ATP = 1-octadecanoyl-2-(9Z,12Z)-octadecadienoyl-sn-glycero-3-phospho-1D-myo-inositol 5-phosphate + ADP + H(+). It carries out the reaction 1-octadecanoyl-2-(5Z,8Z,11Z,14Z-eicosatetraenoyl)-sn-glycero-3-phospho-(1D-myo-inositol) + ATP = 1-octadecanoyl-2-(5Z,8Z,11Z,14Z)-eicosatetraenoyl-sn-glycero-3-phospho-1D-myo-inositol 5-phosphate + ADP + H(+). It catalyses the reaction 1,2-di-(9Z,12Z)-octadecadienoyl-sn-glycero-3-phospho-1D-myo-inositol + ATP = 1,2-di(9Z,12Z)-octadecadienoyl-sn-glycero-3-phospho-1D-myo-inositol 5-phosphate + ADP + H(+). Functionally, catalyzes the phosphorylation of phosphatidylinositol 4-phosphate (PtdIns(4)P/PI4P) to form phosphatidylinositol 4,5-bisphosphate (PtdIns(4,5)P2/PIP2), a lipid second messenger that regulates several cellular processes such as signal transduction, vesicle trafficking, actin cytoskeleton dynamics, cell adhesion, and cell motility. PtdIns(4,5)P2 can directly act as a second messenger or can be utilized as a precursor to generate other second messengers: inositol 1,4,5-trisphosphate (IP3), diacylglycerol (DAG) or phosphatidylinositol-3,4,5-trisphosphate (PtdIns(3,4,5)P3/PIP3). PIP5K1A-mediated phosphorylation of PtdIns(4)P is the predominant pathway for PtdIns(4,5)P2 synthesis. Can also use phosphatidylinositol (PtdIns) as substrate in vitro. Together with PIP5K1C, is required for phagocytosis, both enzymes regulating different types of actin remodeling at sequential steps. Promotes particle ingestion by activating the WAS GTPase-binding protein that induces Arp2/3 dependent actin polymerization at the nascent phagocytic cup. Together with PIP5K1B, is required, after stimulation by G-protein coupled receptors, for the synthesis of IP3 that will induce stable platelet adhesion. Recruited to the plasma membrane by the E-cadherin/beta-catenin complex where it provides the substrate PtdIns(4,5)P2 for the production of PtdIns(3,4,5)P3, IP3 and DAG, that will mobilize internal calcium and drive keratinocyte differentiation. Positively regulates insulin-induced translocation of SLC2A4 to the cell membrane in adipocytes. Together with PIP5K1C has a role during embryogenesis. Independently of its catalytic activity, is required for membrane ruffling formation, actin organization and focal adhesion formation during directional cell migration by controlling integrin-induced translocation of the small GTPase RAC1 to the plasma membrane. Also functions in the nucleus where it acts as an activator of TUT1 adenylyltransferase activity in nuclear speckles, thereby regulating mRNA polyadenylation of a select set of mRNAs. In Rattus norvegicus (Rat), this protein is Phosphatidylinositol 4-phosphate 5-kinase type-1 alpha.